Here is a 116-residue protein sequence, read N- to C-terminus: Early 4 ORF3 protein (116 aa).

Belongs to the adenoviridae E4 ORF3 family. Homodimer. Multimerizes through C-terminus tail by reciprocal or nonreciprocal interactions. Interacts with host PML isoform 2 C-terminal disordered region. Interacts with E1B-55k; this interaction is necessary for E1B 55 kDa protein to localize to the nuclear matrix fraction of the cell. May interact with host TRIM24, CREBBP, EP300, PRKDC and the MRN complex MRE11/RAD50/NBS1; these interactions may happen through nuclear bodies complexes.

The protein resides in the host nucleus. In terms of biological role, forms a multivalent network in host nucleus that inhibits nuclear bodies and prevents antiviral cellular activities. The network is made of multimerized dimers and surrounds adenovirus replication centers and nucleolus. Plays a role in splicing of the major late transcript. Prevents viral genome concatemer formation. The sequence is that of Early 4 ORF3 protein from Human adenovirus C serotype 2 (HAdV-2).